A 192-amino-acid polypeptide reads, in one-letter code: Adenylate kinase (192 aa).

10–18 is an ATP binding site; that stretch reads GVPGVGGTT.

It belongs to the archaeal adenylate kinase family. As to quaternary structure, monomer.

The protein localises to the cytoplasm. The catalysed reaction is AMP + ATP = 2 ADP. In Methanococcus maripaludis (strain DSM 14266 / JCM 13030 / NBRC 101832 / S2 / LL), this protein is Adenylate kinase.